The sequence spans 303 residues: Scaffolding protein (303 aa).

Positions 1 to 74 are post-transcriptional autoregulatory domain; the sequence is MEPTTEIQAT…RRRIERKRQR (74 aa). An interaction with the capsid protein region spans residues 275–303; it reads AIRKQMDAAASKGDVETYRKLKAKLKGIR.

In terms of assembly, homodimer. Homotetramer. Interacts with the portal protein; this interaction initiates procapsid assembly, thereby ensuring incorporation of only one portal ring per capsid. Interacts (via C-terminus) with the capsid protein; this interaction allow to form the procapsid, in which the scaffolding protein forms an internal shell in the icosahedrally arranged capsid protein subunits.

Required for procapsid assembly. The interior of the prohead is filled with the scaffolding protein. The scaffolding protein is lost from the structure during packaging. Scaffolding protein exit is followed by the expansion of the procapsid into a mature capsid. The sequence is that of Scaffolding protein (8) from Salmonella typhimurium (Bacteriophage P22).